The following is a 207-amino-acid chain: Basic helix-loop-helix transcription factor scleraxis (207 aa).

2 disordered regions span residues 1–91 and 151–183; these read MSFA…RDRT and AFFH…QPKQ. The span at 73-91 shows a compositional bias: basic and acidic residues; the sequence is PGREPRQRHTANARERDRT. In terms of domain architecture, bHLH spans 78 to 130; the sequence is RQRHTANARERDRTNSVNTAFTALRTLIPTEPADRKLSKIETLRLASSYISHL. Residues 161–171 are compositionally biased toward pro residues; sequence PLPPPPPPPPL.

As to quaternary structure, efficient DNA binding requires dimerization with another bHLH protein. Dimerizes and binds the E-box consensus sequence with E12. Expressed in mesenchymal precursors of cartilage and in connective tissue. Highly expressed in tendons in the limb, tongue and diaphragm and in cartilage of the bronchi.

The protein resides in the nucleus. Plays an early essential role in mesoderm formation, as well as a later role in formation of somite-derived chondrogenic lineages. The sequence is that of Basic helix-loop-helix transcription factor scleraxis (Scx) from Mus musculus (Mouse).